The following is a 149-amino-acid chain: MNKQLRQLKVREILCQHDVGNQHDLMRLLNSAGIRVAQATLSRDCNEIGVVRSRDSKGYRLVYSEKNPGWIIKGLVGVEVLSVKANETSIIIRTLPGRAHGVGSFLDELKSPMILGTIAGDDTVLVIPGSIKQISELVSYIKDNLSQNA.

This sequence belongs to the ArgR family.

It localises to the cytoplasm. Its pathway is amino-acid biosynthesis; L-arginine biosynthesis [regulation]. Regulates arginine biosynthesis genes. This Chlorobium phaeobacteroides (strain DSM 266 / SMG 266 / 2430) protein is Arginine repressor.